We begin with the raw amino-acid sequence, 134 residues long: D-ribose pyranase (134 aa).

The active-site Proton donor is the histidine 20. Substrate contacts are provided by residues aspartate 28, histidine 99, and 123 to 125; that span reads YSN.

This sequence belongs to the RbsD / FucU family. RbsD subfamily. As to quaternary structure, homodecamer.

Its subcellular location is the cytoplasm. It carries out the reaction beta-D-ribopyranose = beta-D-ribofuranose. Its pathway is carbohydrate metabolism; D-ribose degradation; D-ribose 5-phosphate from beta-D-ribopyranose: step 1/2. Catalyzes the interconversion of beta-pyran and beta-furan forms of D-ribose. The polypeptide is D-ribose pyranase (Staphylococcus aureus (strain USA300)).